An 88-amino-acid chain; its full sequence is Sec-independent protein translocase protein TatA (88 aa).

The chain crosses the membrane as a helical span at residues 1–21; the sequence is MGGIGIWQLAIITVIVILLFG. A disordered region spans residues 46–88; that stretch reads DNDKDSTQVDDKDSTQVDDNAKQPSNKKVEENIKEQSKEKDRA.

It belongs to the TatA/E family. In terms of assembly, the Tat system comprises two distinct complexes: a TatABC complex, containing multiple copies of TatA, TatB and TatC subunits, and a separate TatA complex, containing only TatA subunits. Substrates initially bind to the TatABC complex, which probably triggers association of the separate TatA complex to form the active translocon.

The protein localises to the cell inner membrane. Its function is as follows. Part of the twin-arginine translocation (Tat) system that transports large folded proteins containing a characteristic twin-arginine motif in their signal peptide across membranes. TatA could form the protein-conducting channel of the Tat system. This chain is Sec-independent protein translocase protein TatA, found in Psychromonas ingrahamii (strain DSM 17664 / CCUG 51855 / 37).